The chain runs to 194 residues: ATP-dependent Clp protease proteolytic subunit (194 aa).

Residue S98 is the Nucleophile of the active site. H123 is a catalytic residue.

This sequence belongs to the peptidase S14 family. As to quaternary structure, fourteen ClpP subunits assemble into 2 heptameric rings which stack back to back to give a disk-like structure with a central cavity, resembling the structure of eukaryotic proteasomes.

The protein resides in the cytoplasm. The enzyme catalyses Hydrolysis of proteins to small peptides in the presence of ATP and magnesium. alpha-casein is the usual test substrate. In the absence of ATP, only oligopeptides shorter than five residues are hydrolyzed (such as succinyl-Leu-Tyr-|-NHMec, and Leu-Tyr-Leu-|-Tyr-Trp, in which cleavage of the -Tyr-|-Leu- and -Tyr-|-Trp bonds also occurs).. Functionally, cleaves peptides in various proteins in a process that requires ATP hydrolysis. Has a chymotrypsin-like activity. Plays a major role in the degradation of misfolded proteins. The sequence is that of ATP-dependent Clp protease proteolytic subunit from Acetivibrio thermocellus (strain ATCC 27405 / DSM 1237 / JCM 9322 / NBRC 103400 / NCIMB 10682 / NRRL B-4536 / VPI 7372) (Clostridium thermocellum).